Here is a 336-residue protein sequence, read N- to C-terminus: Phosphoribosylformylglycinamidine cyclo-ligase (336 aa).

This sequence belongs to the AIR synthase family.

The protein resides in the cytoplasm. The enzyme catalyses 2-formamido-N(1)-(5-O-phospho-beta-D-ribosyl)acetamidine + ATP = 5-amino-1-(5-phospho-beta-D-ribosyl)imidazole + ADP + phosphate + H(+). It functions in the pathway purine metabolism; IMP biosynthesis via de novo pathway; 5-amino-1-(5-phospho-D-ribosyl)imidazole from N(2)-formyl-N(1)-(5-phospho-D-ribosyl)glycinamide: step 2/2. In Thermoanaerobacter sp. (strain X514), this protein is Phosphoribosylformylglycinamidine cyclo-ligase.